The primary structure comprises 114 residues: Ribonuclease P protein component (114 aa).

It belongs to the RnpA family. As to quaternary structure, consists of a catalytic RNA component (M1 or rnpB) and a protein subunit.

The catalysed reaction is Endonucleolytic cleavage of RNA, removing 5'-extranucleotides from tRNA precursor.. RNaseP catalyzes the removal of the 5'-leader sequence from pre-tRNA to produce the mature 5'-terminus. It can also cleave other RNA substrates such as 4.5S RNA. The protein component plays an auxiliary but essential role in vivo by binding to the 5'-leader sequence and broadening the substrate specificity of the ribozyme. The sequence is that of Ribonuclease P protein component from Buchnera aphidicola subsp. Baizongia pistaciae (strain Bp).